The sequence spans 98 residues: La1-like protein 13 (98 aa).

The first 24 residues, 1–24, serve as a signal peptide directing secretion; that stretch reads MERILKPVFLAILIVLSFSSQCMG. Lys97 bears the Lysine amide mark.

This sequence belongs to the scorpion La1-like peptide family. Post-translationally, contains 4 disulfide bonds. As to expression, expressed by the venom gland.

It is found in the secreted. The polypeptide is La1-like protein 13 (Urodacus yaschenkoi (Inland robust scorpion)).